The following is a 441-amino-acid chain: MEYTPSPKPQLSSRANAFSIAALMSSGTPKDKEAQESTIKPLEQFVEKSSCSQPIGDISIVDSHGEFTNSPSSLCTEPLIPTTPIIPSEEMAKISCSLETKELWDKFHDLGTEMIITKSGRRMFPTIRVSFSGVDADAKYIVLMDIVPVDNKRYRYAYHRSAWLVAGKADPPLPARLYVHPDSPFTGEQLLKQMVSFEKVKLTNNELDQHGHIILNSMHKYQPRVHIIKKKDHTASLLNLKSEEFRTFIFQETVFTAVTAYQNQLITKLKIDSNPFAKGFRDSSRLTDIERESVESLIQKHSYARSPIRTYGGDEDVLSEDGQVVQCRGSAFTTSDNLSLSSWVSSTSGFSGFQHPQSLTALGTSTASLATPIPHPIQGSLPPYSRLGMPLTPSALASSMQGSGPTFPSFHMPRYHHYFQQGPYAAIQGLRHSSTVMTPFV.

The T-box DNA-binding region spans leucine 103 to aspartate 282.

As to expression, expressed throughout all cardiac tissue during later stages of development. Also expressed in the cement gland, jugular vein, lung bud, cloacal aperture, rhombomeres 2, 4, 6 and 8 and in a subset of motor neurons.

It is found in the nucleus. Transcriptional regulator that may be involved in heart developmental processes. The protein is T-box transcription factor TBX20 (tbx20) of Xenopus laevis (African clawed frog).